A 593-amino-acid polypeptide reads, in one-letter code: Pentatricopeptide repeat-containing protein At5g24830 (593 aa).

PPR repeat units follow at residues Cys-120 to Pro-154, Gly-155 to Pro-189, Asn-190 to Pro-224, Asn-225 to Ser-256, Asp-264 to Ala-298, Asp-299 to Pro-333, Asp-334 to Pro-368, Asp-369 to Pro-403, Glu-404 to Pro-438, Asn-439 to Pro-473, Asp-474 to Pro-508, and Asp-509 to Ile-543.

It belongs to the PPR family. P subfamily.

This Arabidopsis thaliana (Mouse-ear cress) protein is Pentatricopeptide repeat-containing protein At5g24830.